The following is a 118-amino-acid chain: Putative pterin-4-alpha-carbinolamine dehydratase (118 aa).

The protein belongs to the pterin-4-alpha-carbinolamine dehydratase family.

The enzyme catalyses (4aS,6R)-4a-hydroxy-L-erythro-5,6,7,8-tetrahydrobiopterin = (6R)-L-erythro-6,7-dihydrobiopterin + H2O. This chain is Putative pterin-4-alpha-carbinolamine dehydratase, found in Pseudomonas savastanoi pv. phaseolicola (strain 1448A / Race 6) (Pseudomonas syringae pv. phaseolicola (strain 1448A / Race 6)).